The chain runs to 106 residues: UPF0213 protein VPA1222 (106 aa).

Positions 7–82 (QHWSVYLIRN…KQLTKSKKEQ (76 aa)) constitute a GIY-YIG domain.

Belongs to the UPF0213 family.

This is UPF0213 protein VPA1222 from Vibrio parahaemolyticus serotype O3:K6 (strain RIMD 2210633).